The following is a 369-amino-acid chain: CASP-like protein 4U1 (369 aa).

The interval M1–S162 is disordered. Topologically, residues M1 to E222 are cytoplasmic. Over residues T7–P23 the composition is skewed to pro residues. The span at S36–A51 shows a compositional bias: basic and acidic residues. 2 stretches are compositionally biased toward low complexity: residues A87–E96 and S114–P127. The chain crosses the membrane as a helical span at residues L223–A243. The Extracellular segment spans residues S244–R262. The helical transmembrane segment at Y263–I283 threads the bilayer. Over R284–Y300 the chain is Cytoplasmic. Residues C301–A321 form a helical membrane-spanning segment. Residues S322 to K339 are Extracellular-facing. The chain crosses the membrane as a helical span at residues I340–I360. Residues S361–V369 are Cytoplasmic-facing.

This sequence belongs to the Casparian strip membrane proteins (CASP) family. In terms of assembly, homodimer and heterodimers.

Its subcellular location is the cell membrane. In Zea mays (Maize), this protein is CASP-like protein 4U1.